The primary structure comprises 986 residues: Bifunctional glutamine synthetase adenylyltransferase/adenylyl-removing enzyme (986 aa).

The adenylyl removase stretch occupies residues 1-471 (MAEAIERSLS…RYAQLFEQEA (471 aa)). Positions 475 to 986 (TETGNLVFTG…RIFQGVVAAA (512 aa)) are adenylyl transferase.

The protein belongs to the GlnE family. The cofactor is Mg(2+).

The catalysed reaction is [glutamine synthetase]-O(4)-(5'-adenylyl)-L-tyrosine + phosphate = [glutamine synthetase]-L-tyrosine + ADP. It catalyses the reaction [glutamine synthetase]-L-tyrosine + ATP = [glutamine synthetase]-O(4)-(5'-adenylyl)-L-tyrosine + diphosphate. Involved in the regulation of glutamine synthetase GlnA, a key enzyme in the process to assimilate ammonia. When cellular nitrogen levels are high, the C-terminal adenylyl transferase (AT) inactivates GlnA by covalent transfer of an adenylyl group from ATP to specific tyrosine residue of GlnA, thus reducing its activity. Conversely, when nitrogen levels are low, the N-terminal adenylyl removase (AR) activates GlnA by removing the adenylyl group by phosphorolysis, increasing its activity. The regulatory region of GlnE binds the signal transduction protein PII (GlnB) which indicates the nitrogen status of the cell. This is Bifunctional glutamine synthetase adenylyltransferase/adenylyl-removing enzyme from Rhizobium meliloti (strain 1021) (Ensifer meliloti).